Here is a 360-residue protein sequence, read N- to C-terminus: MTFHEEDLDQAEEVHVRSLTAAEADGDERAVEAALRPRTLDEVVGQVRVRDQLGLVLEAARRRGRAPDHVLLSGPPGLGKTTLAMIIASEMGAPLRLTSGPAITHAGDLAAILSGMNEGDVLFVDEIHRMSRPAEEMLYMAMEDFRVDVVIGKGPGATAIPLEIPPFTLVGATTRAGLLPGPLRDRFGFTAHLEFYEPDELDLIVQRSARLLDVHVLPDGTAEIASRSRGTPRIANRLLRRVRDFAQVRADGVVTLPVAQDALDLYEVDQLGLDRLDRGVLDVLCRRFGGGPVGISTLAVAVGEERETVEEVAEPFLVRNGFLARTPRGRVATPAAWEHLGLTAPPTLTLPESDPPLFED.

The segment at 4 to 196 is large ATPase domain (RuvB-L); it reads HEEDLDQAEE…FGFTAHLEFY (193 aa). Residues leucine 35, arginine 36, glycine 77, lysine 80, threonine 81, threonine 82, 143–145, arginine 186, tyrosine 196, and arginine 233 contribute to the ATP site; that span reads EDF. Threonine 81 contacts Mg(2+). The tract at residues 197–267 is small ATPAse domain (RuvB-S); sequence EPDELDLIVQ…VAQDALDLYE (71 aa). A head domain (RuvB-H) region spans residues 270–360; sequence QLGLDRLDRG…PESDPPLFED (91 aa). DNA is bound by residues arginine 306, arginine 325, and arginine 330.

Belongs to the RuvB family. In terms of assembly, homohexamer. Forms an RuvA(8)-RuvB(12)-Holliday junction (HJ) complex. HJ DNA is sandwiched between 2 RuvA tetramers; dsDNA enters through RuvA and exits via RuvB. An RuvB hexamer assembles on each DNA strand where it exits the tetramer. Each RuvB hexamer is contacted by two RuvA subunits (via domain III) on 2 adjacent RuvB subunits; this complex drives branch migration. In the full resolvosome a probable DNA-RuvA(4)-RuvB(12)-RuvC(2) complex forms which resolves the HJ.

It is found in the cytoplasm. It catalyses the reaction ATP + H2O = ADP + phosphate + H(+). Functionally, the RuvA-RuvB-RuvC complex processes Holliday junction (HJ) DNA during genetic recombination and DNA repair, while the RuvA-RuvB complex plays an important role in the rescue of blocked DNA replication forks via replication fork reversal (RFR). RuvA specifically binds to HJ cruciform DNA, conferring on it an open structure. The RuvB hexamer acts as an ATP-dependent pump, pulling dsDNA into and through the RuvAB complex. RuvB forms 2 homohexamers on either side of HJ DNA bound by 1 or 2 RuvA tetramers; 4 subunits per hexamer contact DNA at a time. Coordinated motions by a converter formed by DNA-disengaged RuvB subunits stimulates ATP hydrolysis and nucleotide exchange. Immobilization of the converter enables RuvB to convert the ATP-contained energy into a lever motion, pulling 2 nucleotides of DNA out of the RuvA tetramer per ATP hydrolyzed, thus driving DNA branch migration. The RuvB motors rotate together with the DNA substrate, which together with the progressing nucleotide cycle form the mechanistic basis for DNA recombination by continuous HJ branch migration. Branch migration allows RuvC to scan DNA until it finds its consensus sequence, where it cleaves and resolves cruciform DNA. The chain is Holliday junction branch migration complex subunit RuvB from Nocardioides sp. (strain ATCC BAA-499 / JS614).